The chain runs to 58 residues: Parvalbumin beta 3 (58 aa).

N-acetylalanine is present on Ala1. Residues Phe24 to Lys58 enclose the EF-hand domain. Ca(2+) contacts are provided by Asp37, Asp39, Ser41, Phe43, Glu45, and Glu48.

It belongs to the parvalbumin family.

Its function is as follows. In muscle, parvalbumin is thought to be involved in relaxation after contraction. It binds two calcium ions. This is Parvalbumin beta 3 from Merluccius senegalensis (Senegalese hake).